The following is a 277-amino-acid chain: Cation-dependent mannose-6-phosphate receptor (277 aa).

Positions 1–26 (MFPFYSCWRTGLLLLLLAVAVRESWQ) are cleaved as a signal peptide. Topologically, residues 27–185 (TEEKTCDLVG…SLACSPEISH (159 aa)) are lumenal. Residues 30 to 181 (KTCDLVGEKG…EMDSSLACSP (152 aa)) form the MRH domain. A disulfide bridge links Cys-32 with Cys-78. 5 N-linked (GlcNAc...) asparagine glycosylation sites follow: Asn-57, Asn-83, Asn-94, Asn-107, and Asn-113. 2 disulfide bridges follow: Cys-132/Cys-167 and Cys-145/Cys-179. Residues 186–210 (LSVGSILLVTFASLVAVYVVGGFLY) form a helical membrane-spanning segment. Residues 211 to 277 (QRLVVGAKGM…EERDDHLLPM (67 aa)) lie on the Cytoplasmic side of the membrane. The segment at 256–277 (RGVGDDQLGEESEERDDHLLPM) is disordered. Ser-267 is modified (phosphoserine).

In terms of assembly, homodimer. Binds GGA1, GGA2 and GGA3.

Its subcellular location is the lysosome membrane. Its function is as follows. Transport of phosphorylated lysosomal enzymes from the Golgi complex and the cell surface to lysosomes. Lysosomal enzymes bearing phosphomannosyl residues bind specifically to mannose-6-phosphate receptors in the Golgi apparatus and the resulting receptor-ligand complex is transported to an acidic prelyosomal compartment where the low pH mediates the dissociation of the complex. This chain is Cation-dependent mannose-6-phosphate receptor (M6PR), found in Homo sapiens (Human).